Consider the following 529-residue polypeptide: Transcription factor kayak (529 aa).

Residues 118–134 (LQGTDSDNSNASWADAQ) are compositionally biased toward polar residues. Disordered regions lie at residues 118-166 (LQGT…SVNG) and 180-239 (NAGR…CRKR). Composition is skewed to low complexity over residues 142–153 (TDTSSAHTDSTS) and 182–201 (GRGSTQGSNTNTSNSATPAR). A bZIP domain is found at 219–282 (EEKRRIRRER…NQLEFFLRAH (64 aa)). Residues 221–240 (KRRIRRERNKQAAARCRKRR) are basic motif. The segment at 247-275 (LTYEVEQLEKKRDGLKKEMETLTDVKNQL) is leucine-zipper. 2 disordered regions span residues 311–390 (AGSC…PMST) and 493–529 (DGGTGLTPVSGPLVPSQNKHPLELPTPTAEPSKLVSL). Positions 315 to 332 (DSGSSSHHNNNSNDSSNG) are enriched in low complexity. Over residues 340–350 (SLNSTGRSNSP) the composition is skewed to polar residues. S349 carries the phosphoserine modification. Over residues 363-375 (DGGLDSSCLLDQD) the composition is skewed to low complexity. Positions 376 to 387 (GPPPSKRFPLPP) are enriched in pro residues.

The protein belongs to the bZIP family. Fos subfamily. In terms of assembly, homodimer. Heterodimer with Jra. The kay-Jra heterodimer binds more stably to the AP-1 site than either of the two proteins alone.

Its subcellular location is the nucleus. Its function is as follows. Developmentally regulated transcription factor AP-1 binds and recognizes the enhancer DNA sequence: 5'-TGA[CG]TCA-3'. May play a role in the function or determination of a particular subset of cells in the developing embryo. Is able to carry out its function either independently of or in conjunction with Jra. The protein is Transcription factor kayak of Drosophila ananassae (Fruit fly).